The sequence spans 90 residues: UPF0335 protein R02793 (90 aa).

It belongs to the UPF0335 family.

The protein is UPF0335 protein R02793 of Rhizobium meliloti (strain 1021) (Ensifer meliloti).